The sequence spans 178 residues: Adenine phosphoribosyltransferase (178 aa).

This sequence belongs to the purine/pyrimidine phosphoribosyltransferase family. Homodimer.

It localises to the cytoplasm. The enzyme catalyses AMP + diphosphate = 5-phospho-alpha-D-ribose 1-diphosphate + adenine. It functions in the pathway purine metabolism; AMP biosynthesis via salvage pathway; AMP from adenine: step 1/1. Catalyzes a salvage reaction resulting in the formation of AMP, that is energically less costly than de novo synthesis. The sequence is that of Adenine phosphoribosyltransferase from Bacteroides fragilis (strain ATCC 25285 / DSM 2151 / CCUG 4856 / JCM 11019 / LMG 10263 / NCTC 9343 / Onslow / VPI 2553 / EN-2).